We begin with the raw amino-acid sequence, 297 residues long: SH2 domain-containing protein 6 (297 aa).

Disordered stretches follow at residues 1–61 (MSCP…FPTR) and 74–93 (MNPQ…RGTS). A compositionally biased stretch (pro residues) spans 36–45 (PSKPPLPPPQ). One can recognise an SH2 domain in the interval 187 to 295 (WYSGNCDRQS…RGLTYLRFPT (109 aa)).

The polypeptide is SH2 domain-containing protein 6 (Sh2d6) (Mus musculus (Mouse)).